The chain runs to 306 residues: UDP-N-acetylenolpyruvoylglucosamine reductase (306 aa).

The 165-residue stretch at 29-193 (RVGGPADWLF…IRASLRGTPD (165 aa)) folds into the FAD-binding PCMH-type domain. R173 is a catalytic residue. S222 serves as the catalytic Proton donor. The active site involves E292.

It belongs to the MurB family. The cofactor is FAD.

The protein localises to the cytoplasm. The enzyme catalyses UDP-N-acetyl-alpha-D-muramate + NADP(+) = UDP-N-acetyl-3-O-(1-carboxyvinyl)-alpha-D-glucosamine + NADPH + H(+). It participates in cell wall biogenesis; peptidoglycan biosynthesis. In terms of biological role, cell wall formation. This chain is UDP-N-acetylenolpyruvoylglucosamine reductase, found in Gluconobacter oxydans (strain 621H) (Gluconobacter suboxydans).